The sequence spans 137 residues: MGEVWTWIISFLILITLLGLIVYQLISLADLEFDYINPYDSASRINFVVLPESILQGFLCVFYLVTGHWFMALLCVPYLYYNFHLYSRKQHLIDVTEIFNLLDWEKKKRLFKLAYIILTLFLTIFWLIYSTLDDYED.

A run of 3 helical transmembrane segments spans residues 8–28 (IISF…LISL), 54–74 (ILQG…MALL), and 113–133 (LAYI…STLD).

Belongs to the cornichon family.

The protein localises to the membrane. The protein is Protein cornichon homolog 3 of Arabidopsis thaliana (Mouse-ear cress).